The primary structure comprises 354 residues: NADH-quinone oxidoreductase subunit H 2 (354 aa).

8 consecutive transmembrane segments (helical) span residues 4–24 (IALFLLVALIKVVLVIFVLLT), 81–101 (ILAPMLAVAMALLSISIVPFG), 130–150 (IGLLIILGVTSIGVYGIALAG), 170–190 (VSYEVSLGLSLVGVLLLSGSF), 201–221 (GGFWNWNIFGGFQFIAFFIYL), 269–289 (VACIASILFLGGWSGPVPGFL), 296–316 (LVPVFWFCLRIFAFLFIYIWV), and 333–353 (WKFLLPLSIANIMVTALFVAL).

Belongs to the complex I subunit 1 family. In terms of assembly, NDH-1 is composed of 14 different subunits. Subunits NuoA, H, J, K, L, M, N constitute the membrane sector of the complex.

The protein resides in the cell inner membrane. It carries out the reaction a quinone + NADH + 5 H(+)(in) = a quinol + NAD(+) + 4 H(+)(out). Functionally, NDH-1 shuttles electrons from NADH, via FMN and iron-sulfur (Fe-S) centers, to quinones in the respiratory chain. The immediate electron acceptor for the enzyme in this species is believed to be ubiquinone. Couples the redox reaction to proton translocation (for every two electrons transferred, four hydrogen ions are translocated across the cytoplasmic membrane), and thus conserves the redox energy in a proton gradient. This subunit may bind ubiquinone. The protein is NADH-quinone oxidoreductase subunit H 2 of Koribacter versatilis (strain Ellin345).